A 122-amino-acid polypeptide reads, in one-letter code: Seripauperin-5 (122 aa).

A helical membrane pass occupies residues 7-24 (IAAGVAAIAAGASAAATT).

It belongs to the SRP1/TIP1 family. Seripauperin subfamily.

It is found in the membrane. This Saccharomyces cerevisiae (strain ATCC 204508 / S288c) (Baker's yeast) protein is Seripauperin-5 (PAU5).